The sequence spans 86 residues: MLNRCISRNTRLPVNLRIASRFYSDGPLGGAGPGNPQDIFIKRERAKEDYYARQQEREQLAHVKEQLKEHKKKLENLENKINNLSK.

A mitochondrion-targeting transit peptide spans 1 to 23; that stretch reads MLNRCISRNTRLPVNLRIASRFY. S24 carries the post-translational modification Phosphoserine.

This sequence belongs to the ATPase inhibitor family. Monomer and homodimer. Monomeric at pH 5.0 and dimeric at either pH 6.5 or 8.0. The protein aggregates increasingly strongly with increasing pH.

Its subcellular location is the mitochondrion. Endogenous low-affinity ATPase inhibitor, which inhibits specifically the reverse ATPase reaction of mitochondrial F(1)F(0)-type ATP synthase. Found to stabilize, together with STF2, a complex of intrinsic ATPase inhibitor INH1 and proton-translocating ATPase in mitochondrial membranes. Binds directly to purified F1-ATPase. This chain is F(1)-ATPase inhibitor STF1, mitochondrial (STF1), found in Saccharomyces cerevisiae (strain ATCC 204508 / S288c) (Baker's yeast).